The following is a 357-amino-acid chain: Chorismate synthase (357 aa).

NADP(+)-binding residues include R48 and R54. Residues 125–127, 238–239, G278, 293–297, and R319 each bind FMN; these read RSS, NA, and KPTSS.

The protein belongs to the chorismate synthase family. In terms of assembly, homotetramer. FMNH2 is required as a cofactor.

It carries out the reaction 5-O-(1-carboxyvinyl)-3-phosphoshikimate = chorismate + phosphate. Its pathway is metabolic intermediate biosynthesis; chorismate biosynthesis; chorismate from D-erythrose 4-phosphate and phosphoenolpyruvate: step 7/7. Functionally, catalyzes the anti-1,4-elimination of the C-3 phosphate and the C-6 proR hydrogen from 5-enolpyruvylshikimate-3-phosphate (EPSP) to yield chorismate, which is the branch point compound that serves as the starting substrate for the three terminal pathways of aromatic amino acid biosynthesis. This reaction introduces a second double bond into the aromatic ring system. This is Chorismate synthase from Blochmanniella floridana.